Consider the following 441-residue polypeptide: N-succinylarginine dihydrolase (441 aa).

Residues 19 to 28, N110, and 137 to 138 each bind substrate; these read AGLSFGNEAS and HR. E174 is an active-site residue. R212 is a substrate binding site. Residue H248 is part of the active site. Substrate contacts are provided by D250 and N359. C365 acts as the Nucleophile in catalysis.

This sequence belongs to the succinylarginine dihydrolase family. Homodimer.

It catalyses the reaction N(2)-succinyl-L-arginine + 2 H2O + 2 H(+) = N(2)-succinyl-L-ornithine + 2 NH4(+) + CO2. Its pathway is amino-acid degradation; L-arginine degradation via AST pathway; L-glutamate and succinate from L-arginine: step 2/5. In terms of biological role, catalyzes the hydrolysis of N(2)-succinylarginine into N(2)-succinylornithine, ammonia and CO(2). The polypeptide is N-succinylarginine dihydrolase (Erwinia tasmaniensis (strain DSM 17950 / CFBP 7177 / CIP 109463 / NCPPB 4357 / Et1/99)).